Consider the following 117-residue polypeptide: Circadian clock oscillator protein KaiB (117 aa).

The protein belongs to the KaiB family. As to quaternary structure, may undergo a major conformational rearrangment; in the free state forms homooligomers. When bound to KaiC switches to a monomeric thioredoxin-fold (KaiB(fs)). The active oscillator complex is probably KaiC(6):KaiB(6).

In terms of biological role, component of the KaiBC clock protein complex, which constitutes the main circadian regulator in cyanobacteria; it may modify the ATPase activity of KaiC. May be a metamorphic protein which reversibly switches between an inactive tetrameric fold and a rare, thioredoxin-like monomeric fold (KaiB(fs)). KaiB(fs) binds phospho-KaiC, and perhaps clock output effectors. This chain is Circadian clock oscillator protein KaiB, found in Prochlorococcus marinus (strain SARG / CCMP1375 / SS120).